A 625-amino-acid chain; its full sequence is 1-deoxy-D-xylulose-5-phosphate synthase (625 aa).

Thiamine diphosphate-binding positions include His80 and 121–123 (GHS). Residue Asp152 participates in Mg(2+) binding. Thiamine diphosphate is bound by residues 153 to 154 (GA), Asn181, Tyr288, and Glu370. A Mg(2+)-binding site is contributed by Asn181.

Belongs to the transketolase family. DXPS subfamily. As to quaternary structure, homodimer. Requires Mg(2+) as cofactor. Thiamine diphosphate serves as cofactor.

The enzyme catalyses D-glyceraldehyde 3-phosphate + pyruvate + H(+) = 1-deoxy-D-xylulose 5-phosphate + CO2. Its pathway is metabolic intermediate biosynthesis; 1-deoxy-D-xylulose 5-phosphate biosynthesis; 1-deoxy-D-xylulose 5-phosphate from D-glyceraldehyde 3-phosphate and pyruvate: step 1/1. In terms of biological role, catalyzes the acyloin condensation reaction between C atoms 2 and 3 of pyruvate and glyceraldehyde 3-phosphate to yield 1-deoxy-D-xylulose-5-phosphate (DXP). In Alteromonas mediterranea (strain DSM 17117 / CIP 110805 / LMG 28347 / Deep ecotype), this protein is 1-deoxy-D-xylulose-5-phosphate synthase.